The following is a 359-amino-acid chain: sn-1 acyl-lipid omega-3 desaturase (ferredoxin) (359 aa).

Helical transmembrane passes span L44 to L64 and W67 to V87. A Histidine box-1 motif is present at residues H89–H93. The Histidine box-2 motif lies at H125–H129. 3 consecutive transmembrane segments (helical) span residues A153–F173, L206–L226, and F228–H248. A Histidine box-3 motif is present at residues H291–S295.

This sequence belongs to the fatty acid desaturase type 2 family. It depends on Fe(2+) as a cofactor.

The protein localises to the membrane. It catalyses the reaction a 1-[(9Z,12Z)-octadecdienoyl]-2-acyl-glycerolipid + 2 reduced [2Fe-2S]-[ferredoxin] + O2 + 2 H(+) = a 1-[(9Z,12Z,15Z)-octadectrienoyl]-2-acyl-glycerolipid + 2 oxidized [2Fe-2S]-[ferredoxin] + 2 H2O. It carries out the reaction a 1-[(6Z,9Z,12Z)-octadectrienoyl]-2-acyl-glycerolipid + 2 reduced [2Fe-2S]-[ferredoxin] + O2 + 2 H(+) = a 1-[(6Z,9Z,12Z,15Z)-octadectetraenoyl]-2-acyl-glycerolipid + 2 oxidized [2Fe-2S]-[ferredoxin] + 2 H2O. It functions in the pathway lipid metabolism; polyunsaturated fatty acid biosynthesis. Desaturase involved in fatty acid biosynthesis. Introduces a double bond at carbon 15 of linoleoyl and gamma-linolenoyl groups attached to the sn-1 position of the glycerol moiety of membrane glycerolipids. The sequence is that of sn-1 acyl-lipid omega-3 desaturase (ferredoxin) from Synechocystis sp. (strain ATCC 27184 / PCC 6803 / Kazusa).